The following is a 466-amino-acid chain: Argininosuccinate lyase (466 aa).

Ser-27, Asn-114, and Thr-159 together coordinate 2-(N(omega)-L-arginino)succinate. His-160 (proton acceptor) is an active-site residue. The Proton donor role is filled by Ser-281. 4 residues coordinate 2-(N(omega)-L-arginino)succinate: Asn-289, Tyr-321, Gln-326, and Lys-329.

This sequence belongs to the lyase 1 family. Argininosuccinate lyase subfamily. In terms of assembly, homotetramer. Eye lens.

The enzyme catalyses 2-(N(omega)-L-arginino)succinate = fumarate + L-arginine. Its pathway is amino-acid biosynthesis; L-arginine biosynthesis; L-arginine from L-ornithine and carbamoyl phosphate: step 3/3. Its function is as follows. Delta crystallin, the principal crystallin in embryonic lens, is found only in birds and reptiles. This protein may also function as an enzymatically active argininosuccinate lyase. This is Argininosuccinate lyase (ASL2) from Gallus gallus (Chicken).